We begin with the raw amino-acid sequence, 765 residues long: Probable ATP-dependent RNA helicase DDX27 (765 aa).

Phosphoserine occurs at positions 23, 25, and 48. Acidic residues predominate over residues leucine 43–threonine 63. Disordered regions lie at residues leucine 43–alanine 83 and lysine 111–aspartate 179. A Required for interaction with the PEBOW complex motif is present at residues phenylalanine 55–phenylalanine 57. Residues glutamate 129–aspartate 156 are compositionally biased toward basic and acidic residues. Serine 135 and serine 146 each carry phosphoserine. Residues threonine 157 to glutamate 172 are compositionally biased toward acidic residues. The Nuclear localization signal signature appears at lysine 164–lysine 169. The Q motif motif lies at leucine 187–lysine 215. Residues isoleucine 218–isoleucine 392 enclose the Helicase ATP-binding domain. Residue alanine 231–threonine 238 participates in ATP binding. The DEAD box signature appears at aspartate 340–aspartate 343. In terms of domain architecture, Helicase C-terminal spans leucine 426 to isoleucine 572. Basic residues predominate over residues valine 716 to serine 725.

Belongs to the DEAD box helicase family. DDX27/DRS1 subfamily. In terms of assembly, associates with PeBoW complex, composed of BOP1, PES1 and WDR12. Interacts directly with BOP1 and PES1.

The protein resides in the nucleus. It is found in the nucleolus. The protein localises to the chromosome. The catalysed reaction is ATP + H2O = ADP + phosphate + H(+). Probable ATP-dependent RNA helicase. Component of the nucleolar ribosomal RNA (rRNA) processing machinery that regulates 3' end formation of ribosomal 47S rRNA. The sequence is that of Probable ATP-dependent RNA helicase DDX27 (DDX27) from Homo sapiens (Human).